A 152-amino-acid polypeptide reads, in one-letter code: MIEFILNGQPVRVTEVPEDAPLLWVVREHLKLSGTKFGCGLGLCGACTVHINGEAARSCITPLSVVARQSVTTIEGLDPQHAHPLQRAWIAEQVPQCGYCQSGQIMQAAALLKKVPKPSDAQIVEAMDGNLCRCGTYQRIKIAIHRAAKEAA.

Residues 1–77 (MIEFILNGQP…RQSVTTIEGL (77 aa)) enclose the 2Fe-2S ferredoxin-type domain. [2Fe-2S] cluster contacts are provided by cysteine 39, cysteine 44, and cysteine 47.

In terms of assembly, heterodimer of an alpha chain and a beta chain.

It carries out the reaction isoquinoline + A + H2O = isoquinolin-1(2H)-one + AH2. Its function is as follows. Specific towards N-containing N-heterocyclic substrates, including isoquinoline, isoquinolin-5-ol, phthalazine and quinazoline. The polypeptide is Isoquinoline 1-oxidoreductase subunit alpha (iorA) (Brevundimonas diminuta (Pseudomonas diminuta)).